Reading from the N-terminus, the 504-residue chain is Maturase K (504 aa).

It belongs to the intron maturase 2 family. MatK subfamily.

It localises to the plastid. It is found in the chloroplast. Functionally, usually encoded in the trnK tRNA gene intron. Probably assists in splicing its own and other chloroplast group II introns. In Impatiens capensis (Spotted jewelweed), this protein is Maturase K.